The primary structure comprises 518 residues: MTTDMDLEQLEYEKEVEEIEKWWATPKQSQIKRPYTASTVAVLSEVTKAYYPSSQQALKLYDLLREHRNKGTATLTYGVVDPVLASQASKAGLETIFVSGCLCGLSSVDEPGMDHADYPWDTVPKAVDRIFRSQNWHARRQKQFHLMKPAEERKQLPKYDYLLPIIADGDMGFGSVTSTMKMTKRFVESGVAMIHLDDLAIGLKRFTVGQGRTVVPTSEYLRRLTAVRLQFDIMKAETMLLCRCDTDHAEFITSVVDPRDHAYVLGATTKIESLIKALKDAESTGVSMKKARENWIERAKLMTFDEAVKSTATPKEYENYISAISKKPFHSISERQELAEKYLSNEVFFDWELPRSSDGQYFFKPTVQTVIERAIAAAPLGEMTWARMDYPKWQDIKAFHEGVRAVYPDRMFAFGFTGNYDFKAAGFSEEQLRNLTSDMAKLGVCWQVQPYFTCQVLNKASVDYSNIWKKDGIFGYVKTVQEPALKEDVDGFENEWCGTYFADKLLSAAGSSDKTIPY.

Belongs to the isocitrate lyase/PEP mutase superfamily. Isocitrate lyase family.

It localises to the mitochondrion matrix. The protein resides in the cytoplasm. It catalyses the reaction (2S,3R)-3-hydroxybutane-1,2,3-tricarboxylate = pyruvate + succinate. It participates in organic acid metabolism; propanoate degradation. Its function is as follows. Catalyzes the formation of pyruvate and succinate from 2-methylisocitrate during the metabolism of endogenous propionyl-CoA. Does not act on isocitrate. The sequence is that of Mitochondrial 2-methylisocitrate lyase (icl2) from Schizosaccharomyces pombe (strain 972 / ATCC 24843) (Fission yeast).